The following is a 259-amino-acid chain: Hemin import ATP-binding protein HmuV (259 aa).

Residues 2-238 (IEARDLNVSI…ALLSEVFDCQ (237 aa)) form the ABC transporter domain. ATP is bound at residue 34–41 (GPNGSGKS).

Belongs to the ABC transporter superfamily. Heme (hemin) importer (TC 3.A.1.14.5) family. The complex is composed of two ATP-binding proteins (HmuV), two transmembrane proteins (HmuU) and a solute-binding protein (HmuT).

The protein localises to the cell inner membrane. In terms of biological role, part of the ABC transporter complex HmuTUV involved in hemin import. Responsible for energy coupling to the transport system. This Chelativorans sp. (strain BNC1) protein is Hemin import ATP-binding protein HmuV.